The chain runs to 135 residues: Lymphocyte antigen 6 complex locus protein G6d (135 aa).

The first 19 residues, 1-19 (MNSQLVGILLSALLGVALG), serve as a signal peptide directing secretion. The 100-residue stretch at 22 to 121 (TRCYDCGGGP…ASSVTPLCIL (100 aa)) folds into the UPAR/Ly6 domain. 5 disulfides stabilise this stretch: Cys24–Cys48, Cys27–Cys35, Cys42–Cys76, Cys82–Cys101, and Cys102–Cys107. Residue Thr68 is glycosylated (O-linked (GalNAc...) threonine). Residue Asn108 is the site of GPI-anchor amidated asparagine attachment. Positions 109 to 135 (SAVASSVTPLCILAAAVTTLAWLLPGL) are cleaved as a propeptide — removed in mature form.

As to quaternary structure, homodimer. In terms of processing, O-glycosylated. In terms of tissue distribution, expressed in embryonic tissue and adult lung, kidney, brain, liver and spleen.

It is found in the cell membrane. It localises to the cell projection. Its subcellular location is the filopodium. In Mus musculus (Mouse), this protein is Lymphocyte antigen 6 complex locus protein G6d (Ly6g6d).